The primary structure comprises 261 residues: MQDTPLIIGSRSFQSRLLVGTGKYKDLNETDLAIQASGAEIVTVAIRRVNIGQNPDQPNLLSVIPPEKYTILPNTAGCFDADSAVRTCMLARELLDGHNLVKLEVLGDEKTLYPNVTETLKAARTLIDDGFEIMVYTSDDPIIAQELESMGCVAIMPLGSLIGSGLGILNPHTISIIKENAKVPVLVDAGVGTASDAAIAMELGCDGVLMNTAIAAAQNPILMASAMKKAVEAGREAFLAGRMPRKRMANASSPETGYFFK.

Catalysis depends on lysine 102, which acts as the Schiff-base intermediate with DXP. 1-deoxy-D-xylulose 5-phosphate-binding positions include glycine 163, 189 to 190 (AG), and 211 to 212 (NT).

The protein belongs to the ThiG family. Homotetramer. Forms heterodimers with either ThiH or ThiS.

The protein resides in the cytoplasm. The catalysed reaction is [ThiS sulfur-carrier protein]-C-terminal-Gly-aminoethanethioate + 2-iminoacetate + 1-deoxy-D-xylulose 5-phosphate = [ThiS sulfur-carrier protein]-C-terminal Gly-Gly + 2-[(2R,5Z)-2-carboxy-4-methylthiazol-5(2H)-ylidene]ethyl phosphate + 2 H2O + H(+). Its pathway is cofactor biosynthesis; thiamine diphosphate biosynthesis. In terms of biological role, catalyzes the rearrangement of 1-deoxy-D-xylulose 5-phosphate (DXP) to produce the thiazole phosphate moiety of thiamine. Sulfur is provided by the thiocarboxylate moiety of the carrier protein ThiS. In vitro, sulfur can be provided by H(2)S. The sequence is that of Thiazole synthase from Acinetobacter baumannii (strain AB307-0294).